The primary structure comprises 901 residues: Core protein VP3 (901 aa).

This sequence belongs to the orbivirus VP3 family.

It is found in the virion. Its function is as follows. The VP3 protein is one of the five proteins (with VP1, VP4, VP6 and VP7) which form the inner capsid of the virus. In Bluetongue virus 10 (isolate USA) (BTV 10), this protein is Core protein VP3 (Segment-3).